Reading from the N-terminus, the 316-residue chain is MSEEKIYDVIIIGAGPAGMTAAVYTSRANLSTLMIERGIPGGQMANTEDVENYPGFESILGPELSNKMFEHAKKFGAEYAYGDIKEVIDGKEYKVVKAGSKEYKARAVIIAAGAEYKKIGVPGEKELGGRGVSYCAVCDGAFFKGKELVVVGGGDSAVEEGVYLTRFASKVTIVHRRDKLRAQSILQARAFDNEKVDFLWNKTVKEIHEENGKVGNVTLVDTVTGEESEFKTDGVFIYIGMLPLSKPFENLGITNEEGYIETNDRMETKVEGIFAAGDIREKSLRQIVTATGDGSIAAQSVQHYVEELQETLKTLK.

36-43 (ERGIPGGQ) is an FAD binding site. An intrachain disulfide couples C135 to C138. FAD is bound at residue 278–287 (DIREKSLRQI).

Belongs to the class-II pyridine nucleotide-disulfide oxidoreductase family. Homodimer. It depends on FAD as a cofactor.

The protein resides in the cytoplasm. It catalyses the reaction [thioredoxin]-dithiol + NADP(+) = [thioredoxin]-disulfide + NADPH + H(+). The polypeptide is Thioredoxin reductase (trxB) (Bacillus subtilis (strain 168)).